The sequence spans 490 residues: Putative alanine aminotransferase (490 aa).

5 residues coordinate pyridoxal 5'-phosphate: A157, S158, Y183, N239, and S308. K311 carries the N6-(pyridoxal phosphate)lysine modification. R320 lines the pyridoxal 5'-phosphate pocket.

It belongs to the class-I pyridoxal-phosphate-dependent aminotransferase family. Alanine aminotransferase subfamily. Homodimer. It depends on pyridoxal 5'-phosphate as a cofactor.

The protein localises to the cytoplasm. The protein resides in the mitochondrion. It catalyses the reaction L-alanine + 2-oxoglutarate = pyruvate + L-glutamate. The protein operates within amino-acid degradation; L-alanine degradation via transaminase pathway; pyruvate from L-alanine: step 1/1. In terms of biological role, alanine aminotransferase involved in both alanine biosynthesis and utilization. In Schizosaccharomyces pombe (strain 972 / ATCC 24843) (Fission yeast), this protein is Putative alanine aminotransferase (alt1).